A 273-amino-acid polypeptide reads, in one-letter code: Ethanolamine ammonia-lyase small subunit (273 aa).

The adenosylcob(III)alamin site is built by valine 164, glutamate 185, and cysteine 214.

It belongs to the EutC family. As to quaternary structure, the basic unit is a heterodimer which dimerizes to form tetramers. The heterotetramers trimerize; 6 large subunits form a core ring with 6 small subunits projecting outwards. Requires adenosylcob(III)alamin as cofactor.

It is found in the bacterial microcompartment. It carries out the reaction ethanolamine = acetaldehyde + NH4(+). The protein operates within amine and polyamine degradation; ethanolamine degradation. Its function is as follows. Catalyzes the deamination of various vicinal amino-alcohols to oxo compounds. Allows this organism to utilize ethanolamine as the sole source of nitrogen and carbon in the presence of external vitamin B12. The chain is Ethanolamine ammonia-lyase small subunit from Pseudomonas aeruginosa (strain UCBPP-PA14).